A 264-amino-acid chain; its full sequence is V-type proton ATPase subunit D (264 aa).

The span at 214-230 shows a compositional bias: basic and acidic residues; that stretch reads RDNAETDAQMKAKKAEQ. The disordered stretch occupies residues 214-264; it reads RDNAETDAQMKAKKAEQQRLALADSENAEGEQTENTPADILAAEEDEDVIF. The segment covering 255-264 has biased composition (acidic residues); that stretch reads AAEEDEDVIF.

It belongs to the V-ATPase D subunit family. As to quaternary structure, V-ATPase is a heteromultimeric enzyme composed of a peripheral catalytic V1 complex (components A to H) attached to an integral membrane V0 proton pore complex (components: a, c, c', c'', d, e, f and VOA1).

The protein resides in the vacuole membrane. Its function is as follows. Subunit of the V1 complex of vacuolar(H+)-ATPase (V-ATPase), a multisubunit enzyme composed of a peripheral complex (V1) that hydrolyzes ATP and a membrane integral complex (V0) that translocates protons. V-ATPase is responsible for acidifying and maintaining the pH of intracellular compartments. The sequence is that of V-type proton ATPase subunit D (vma-8) from Neurospora crassa (strain ATCC 24698 / 74-OR23-1A / CBS 708.71 / DSM 1257 / FGSC 987).